The primary structure comprises 590 residues: Probable lysine-specific demethylase 4B (590 aa).

Residues 9 to 51 (IKVFRPTWEEFKDFPKYVAYMESQGAHKAGLAKVVPPPEWVPR) form the JmjN domain. Tyrosine 130 is a 2-oxoglutarate binding site. Residues 140–306 (DTDQDSWNIN…YGKRAVQCTC (167 aa)) form the JmjC domain. Fe cation is bound by residues histidine 186 and glutamate 188. Positions 196 and 204 each coordinate 2-oxoglutarate. 2 residues coordinate Zn(2+): cysteine 232 and histidine 238. 2-oxoglutarate is bound at residue lysine 239. Histidine 274 contributes to the Fe cation binding site. Residues cysteine 304 and cysteine 306 each coordinate Zn(2+). Disordered stretches follow at residues 372 to 395 (PTKA…QNPN) and 417 to 590 (ATDE…TASP). Residues 445–458 (EYIDDGTEDDDEEE) show a composition bias toward acidic residues. Over residues 480–494 (SKRKTNSRNNRGRSP) the composition is skewed to basic residues. Low complexity-rich tracts occupy residues 502 to 513 (ISPASSTSSTSR) and 537 to 571 (TTSP…TPPA).

This sequence belongs to the JHDM3 histone demethylase family. It depends on Fe(2+) as a cofactor.

It is found in the nucleus. The enzyme catalyses N(6),N(6),N(6)-trimethyl-L-lysyl(9)-[histone H3] + 2 2-oxoglutarate + 2 O2 = N(6)-methyl-L-lysyl(9)-[histone H3] + 2 formaldehyde + 2 succinate + 2 CO2. Probable histone demethylase that specifically demethylates 'Lys-9' and 'Lys-36' residues of histone H3, thereby playing a central role in histone code. Demethylation of Lys residue generates formaldehyde and succinate. In Drosophila melanogaster (Fruit fly), this protein is Probable lysine-specific demethylase 4B (Kdm4B).